A 468-amino-acid polypeptide reads, in one-letter code: Cyclin-T1.1 (468 aa).

Residues 336–354 (KERGVEEERRKRERDRMAG) are compositionally biased toward basic and acidic residues. Residues 336 to 468 (KERGVEEERR…DMDLEDGELE (133 aa)) form a disordered region. Residues 387–402 (APPPIPPQLNFPPPPI) are compositionally biased toward pro residues. Acidic residues predominate over residues 458 to 468 (SDMDLEDGELE).

This sequence belongs to the cyclin family. Cyclin C subfamily.

Its function is as follows. Regulatory subunit of the cyclin-dependent kinase pair (CDK9/cyclin T) complex, also called positive transcription elongation factor B (P-TEFb), which is proposed to facilitate the transition from abortive to production elongation by phosphorylating the CTD (carboxy-terminal domain) of the large subunit of RNA polymerase II (RNAP II). This chain is Cyclin-T1.1, found in Caenorhabditis elegans.